A 362-amino-acid polypeptide reads, in one-letter code: Phosphoserine aminotransferase (362 aa).

L-glutamate-binding residues include Ser9 and Arg42. Residues 76–77, Trp102, Thr153, Asp174, and Gln197 contribute to the pyridoxal 5'-phosphate site; that span reads GR. Lys198 bears the N6-(pyridoxal phosphate)lysine mark. 239 to 240 is a binding site for pyridoxal 5'-phosphate; sequence NT.

This sequence belongs to the class-V pyridoxal-phosphate-dependent aminotransferase family. SerC subfamily. Homodimer. Requires pyridoxal 5'-phosphate as cofactor.

Its subcellular location is the cytoplasm. It carries out the reaction O-phospho-L-serine + 2-oxoglutarate = 3-phosphooxypyruvate + L-glutamate. The enzyme catalyses 4-(phosphooxy)-L-threonine + 2-oxoglutarate = (R)-3-hydroxy-2-oxo-4-phosphooxybutanoate + L-glutamate. It participates in amino-acid biosynthesis; L-serine biosynthesis; L-serine from 3-phospho-D-glycerate: step 2/3. Its pathway is cofactor biosynthesis; pyridoxine 5'-phosphate biosynthesis; pyridoxine 5'-phosphate from D-erythrose 4-phosphate: step 3/5. In terms of biological role, catalyzes the reversible conversion of 3-phosphohydroxypyruvate to phosphoserine and of 3-hydroxy-2-oxo-4-phosphonooxybutanoate to phosphohydroxythreonine. The sequence is that of Phosphoserine aminotransferase from Shigella boydii serotype 4 (strain Sb227).